The chain runs to 313 residues: Porphobilinogen deaminase (313 aa).

The residue at position 242 (Cys242) is an S-(dipyrrolylmethanemethyl)cysteine.

It belongs to the HMBS family. In terms of assembly, monomer. Dipyrromethane serves as cofactor.

The enzyme catalyses 4 porphobilinogen + H2O = hydroxymethylbilane + 4 NH4(+). The protein operates within porphyrin-containing compound metabolism; protoporphyrin-IX biosynthesis; coproporphyrinogen-III from 5-aminolevulinate: step 2/4. Tetrapolymerization of the monopyrrole PBG into the hydroxymethylbilane pre-uroporphyrinogen in several discrete steps. The sequence is that of Porphobilinogen deaminase from Salmonella dublin (strain CT_02021853).